The following is a 236-amino-acid chain: Syntaxin-8 (236 aa).

Topologically, residues M1–G215 are cytoplasmic. The stretch at L42–A65 forms a coiled coil. Residues Q145–V207 form the t-SNARE coiled-coil homology domain. Residue S160 is modified to Phosphoserine. A helical; Anchor for type IV membrane protein membrane pass occupies residues M216–V232. The Vesicular segment spans residues W233 to N236.

It belongs to the syntaxin family. In terms of assembly, forms a SNARE complex with STX7, VTI1B and VAMP8 which functions in the homotypic fusion of late endosomes. Part of the SNARE core complex containing STX7, VAMP8 and VTI1B. Interacts with VAMP8. Interacts with HECTD3. Interacts with TPC1. Ubiquitinated by HECTD3.

The protein resides in the membrane. In terms of biological role, vesicle trafficking protein that functions in the early secretory pathway, possibly by mediating retrograde transport from cis-Golgi membranes to the ER. This is Syntaxin-8 (Stx8) from Mus musculus (Mouse).